The following is a 307-amino-acid chain: Pantothenate kinase (307 aa).

Residue 90 to 97 (GSVAVGKS) coordinates ATP.

The protein belongs to the prokaryotic pantothenate kinase family.

It localises to the cytoplasm. It carries out the reaction (R)-pantothenate + ATP = (R)-4'-phosphopantothenate + ADP + H(+). Its pathway is cofactor biosynthesis; coenzyme A biosynthesis; CoA from (R)-pantothenate: step 1/5. This is Pantothenate kinase from Enterococcus faecalis (strain ATCC 700802 / V583).